Here is a 357-residue protein sequence, read N- to C-terminus: RNA-binding protein 4B (357 aa).

2 RRM domains span residues 2–72 and 78–148; these read VKLF…ASKN and TKLH…LSTS. The CCHC-type zinc finger occupies 160 to 177; sequence SGCYRCGKEGHWSKECPV. The interval 196–357 is interaction with TNPO3; that stretch reads AVRTPYTMGY…YVDRTRYSAF (162 aa).

As to quaternary structure, interacts with TNPO3, which may mediate nuclear import of the protein. As to expression, expressed in the suprachiasmatic nucleus (SCN) (at protein level). Expressed in the suprachiasmatic nucleus (SCN).

It localises to the nucleus. The protein localises to the nucleolus. In terms of biological role, required for the translational activation of PER1 mRNA in response to circadian clock. Binds directly to the 3'-UTR of the PER1 mRNA. In Mus musculus (Mouse), this protein is RNA-binding protein 4B (Rbm4b).